We begin with the raw amino-acid sequence, 275 residues long: Release factor glutamine methyltransferase (275 aa).

Residues 117 to 121 (GTGSG), D140, W168, and N182 contribute to the S-adenosyl-L-methionine site. 182 to 185 (NPPY) contacts substrate.

This sequence belongs to the protein N5-glutamine methyltransferase family. PrmC subfamily.

The enzyme catalyses L-glutaminyl-[peptide chain release factor] + S-adenosyl-L-methionine = N(5)-methyl-L-glutaminyl-[peptide chain release factor] + S-adenosyl-L-homocysteine + H(+). Its function is as follows. Methylates the class 1 translation termination release factors RF1/PrfA and RF2/PrfB on the glutamine residue of the universally conserved GGQ motif. This chain is Release factor glutamine methyltransferase, found in Buchnera aphidicola subsp. Schizaphis graminum (strain Sg).